A 166-amino-acid polypeptide reads, in one-letter code: UPF0304 protein VFMJ11_1926 (166 aa).

It belongs to the UPF0304 family.

This is UPF0304 protein VFMJ11_1926 from Aliivibrio fischeri (strain MJ11) (Vibrio fischeri).